We begin with the raw amino-acid sequence, 709 residues long: Elongation factor G (709 aa).

One can recognise a tr-type G domain in the interval 9–295 (AKVRNIGIMA…AVVRYLPTPL (287 aa)). GTP is bound by residues 18 to 25 (AHIDAGKT), 86 to 90 (DTPGH), and 140 to 143 (NKLD).

It belongs to the TRAFAC class translation factor GTPase superfamily. Classic translation factor GTPase family. EF-G/EF-2 subfamily.

It localises to the cytoplasm. Catalyzes the GTP-dependent ribosomal translocation step during translation elongation. During this step, the ribosome changes from the pre-translocational (PRE) to the post-translocational (POST) state as the newly formed A-site-bound peptidyl-tRNA and P-site-bound deacylated tRNA move to the P and E sites, respectively. Catalyzes the coordinated movement of the two tRNA molecules, the mRNA and conformational changes in the ribosome. This is Elongation factor G from Streptomyces avermitilis (strain ATCC 31267 / DSM 46492 / JCM 5070 / NBRC 14893 / NCIMB 12804 / NRRL 8165 / MA-4680).